The sequence spans 315 residues: Aspartate carbamoyltransferase catalytic subunit (315 aa).

Carbamoyl phosphate contacts are provided by R54 and T55. K82 is an L-aspartate binding site. Carbamoyl phosphate is bound by residues R104, H134, and Q137. Residues R174 and R229 each coordinate L-aspartate. G270 and P271 together coordinate carbamoyl phosphate.

This sequence belongs to the aspartate/ornithine carbamoyltransferase superfamily. ATCase family. Heterododecamer (2C3:3R2) of six catalytic PyrB chains organized as two trimers (C3), and six regulatory PyrI chains organized as three dimers (R2).

The catalysed reaction is carbamoyl phosphate + L-aspartate = N-carbamoyl-L-aspartate + phosphate + H(+). The protein operates within pyrimidine metabolism; UMP biosynthesis via de novo pathway; (S)-dihydroorotate from bicarbonate: step 2/3. Catalyzes the condensation of carbamoyl phosphate and aspartate to form carbamoyl aspartate and inorganic phosphate, the committed step in the de novo pyrimidine nucleotide biosynthesis pathway. The sequence is that of Aspartate carbamoyltransferase catalytic subunit from Leifsonia xyli subsp. xyli (strain CTCB07).